We begin with the raw amino-acid sequence, 178 residues long: Caveolin-1 (178 aa).

Ser-2 bears the N-acetylserine mark. The residue at position 2 (Ser-2) is a Phosphoserine. Residues 2-94 (SGGKYVDSEG…WKASFTTFTV (93 aa)) form a required for homooligomerization region. Residues 2-104 (SGGKYVDSEG…TKYWFYRLLS (103 aa)) are Cytoplasmic-facing. Lys-5 bears the N6-acetyllysine; alternate mark. Lys-5 participates in a covalent cross-link: Glycyl lysine isopeptide (Lys-Gly) (interchain with G-Cter in ubiquitin); alternate. Position 6 is a phosphotyrosine (Tyr-6). A Phosphoserine modification is found at Ser-9. Tyr-14 carries the post-translational modification Phosphotyrosine; by ABL1. Tyr-25 carries the phosphotyrosine modification. Glycyl lysine isopeptide (Lys-Gly) (interchain with G-Cter in ubiquitin) cross-links involve residues Lys-26 and Lys-30. Phosphoserine is present on Ser-37. Glycyl lysine isopeptide (Lys-Gly) (interchain with G-Cter in ubiquitin) cross-links involve residues Lys-39, Lys-47, and Lys-57. Residues 82-94 (DGIWKASFTTFTV) form an interaction with CAVIN3 region. Residues 105-125 (ALFGIPMALIWGIYFAILSFL) constitute an intramembrane region (helical). Residues 126–178 (HIWAVVPCIKSFLIEIQCISRVYSIYVHTVCDPLFEAVGKIFSNVRINLQKEI) lie on the Cytoplasmic side of the membrane. The tract at residues 131–142 (VPCIKSFLIEIQ) is interacts with SPRY1, SPRY2, SPRY3 and SPRY4. Residues Cys-133, Cys-143, and Cys-156 are each lipidated (S-palmitoyl cysteine). Residues 149 to 160 (SIYVHTVCDPLF) form an interacts with SPRY1, SPRY2, and SPRY4 region. An interacts with SPRY1, SPRY2, SPRY3 and SPRY4 region spans residues 167–178 (FSNVRINLQKEI).

Belongs to the caveolin family. Homooligomer. Interacts (via the N-terminus) with DPP4; the interaction is direct. Forms a stable heterooligomeric complex with CAV2 that targets to lipid rafts and drives caveolae formation. Interacts with PACSIN2; this interaction induces membrane tubulation. Interacts with BMX, BTK, CTNNB1, CDH1, GLIPR2, JUP, NOSTRIN, SNAP25 and STX1A. Interacts with SLC7A9. Interacts with TGFBR1. Interacts with CAVIN3 (via leucine-zipper domain) in a cholesterol-sensitive manner. Interacts with CAVIN1. Interacts with EHD2 in a cholesterol-dependent manner. Forms a ternary complex with UBXN6 and VCP; mediates CAV1 targeting to lysosomes for degradation. Interacts with ABCG1; this interaction regulates ABCG1-mediated cholesterol efflux. Interacts with NEU3; this interaction enhances NEU3 sialidase activity within caveola. Interacts (via C-terminus) with SPRY1, SPRY2 (via C-terminus), SPRY3, and SPRY4. Interacts with IGFBP5; this interaction allows trafficking of IGFBP5 from the plasma membrane to the nucleus. In terms of processing, phosphorylated at Tyr-14 by ABL1 in response to oxidative stress. Post-translationally, ubiquitinated. Undergo monoubiquitination and multi- and/or polyubiquitination. Monoubiquitination of N-terminal lysines promotes integration in a ternary complex with UBXN6 and VCP which promotes oligomeric CAV1 targeting to lysosomes for degradation. Ubiquitinated by ZNRF1; leading to degradation and modulation of the TLR4-mediated immune response.

It localises to the golgi apparatus membrane. The protein localises to the cell membrane. The protein resides in the membrane. Its subcellular location is the caveola. It is found in the membrane raft. Functionally, may act as a scaffolding protein within caveolar membranes. Forms a stable heterooligomeric complex with CAV2 that targets to lipid rafts and drives caveolae formation. Mediates the recruitment of CAVIN proteins (CAVIN1/2/3/4) to the caveolae. Interacts directly with G-protein alpha subunits and can functionally regulate their activity. Involved in the costimulatory signal essential for T-cell receptor (TCR)-mediated T-cell activation. Its binding to DPP4 induces T-cell proliferation and NF-kappa-B activation in a T-cell receptor/CD3-dependent manner. Recruits CTNNB1 to caveolar membranes and may regulate CTNNB1-mediated signaling through the Wnt pathway. Negatively regulates TGFB1-mediated activation of SMAD2/3 by mediating the internalization of TGFBR1 from membrane rafts leading to its subsequent degradation. Binds 20(S)-hydroxycholesterol (20(S)-OHC). The sequence is that of Caveolin-1 (CAV1) from Chlorocebus aethiops (Green monkey).